Here is a 341-residue protein sequence, read N- to C-terminus: Ubiquinone biosynthesis protein COQ4, mitochondrial (341 aa).

Residues 1–16 (MLSRISSVRIGTQVRQ) constitute a mitochondrion transit peptide. Zn(2+)-binding residues include H220, D221, H224, and E236.

Belongs to the COQ4 family. Component of a multi-subunit COQ enzyme complex, composed of at least COQ3, COQ4, COQ5, COQ6, COQ7 and COQ9. The cofactor is Zn(2+).

It localises to the mitochondrion inner membrane. The catalysed reaction is a 4-hydroxy-3-methoxy-5-(all-trans-polyprenyl)benzoate + H(+) = a 2-methoxy-6-(all-trans-polyprenyl)phenol + CO2. The protein operates within cofactor biosynthesis; ubiquinone biosynthesis. Functionally, lyase that catalyzes the C1-decarboxylation of 4-hydroxy-3-methoxy-5-(all-trans-polyprenyl)benzoic acid into 2-methoxy-6-(all-trans-polyprenyl)phenol during ubiquinone biosynthesis. The protein is Ubiquinone biosynthesis protein COQ4, mitochondrial of Vanderwaltozyma polyspora (strain ATCC 22028 / DSM 70294 / BCRC 21397 / CBS 2163 / NBRC 10782 / NRRL Y-8283 / UCD 57-17) (Kluyveromyces polysporus).